Reading from the N-terminus, the 2471-residue chain is Neurogenic locus notch homolog protein 2 (2471 aa).

Positions 1–25 (MPALRPALLWALLALWLCCAAPAHA) are cleaved as a signal peptide. EGF-like domains lie at 26–63 (LQCR…EYCQ), 64–102 (HRDP…EDCQ), 105–143 (TSHP…KECQ), and 144–180 (WTDA…QKCE). Residues 26-1677 (LQCRDGYEPC…SESLTPERTQ (1652 aa)) are Extracellular-facing. Disulfide bonds link Cys28-Cys41, Cys35-Cys51, Cys53-Cys62, Cys68-Cys79, Cys73-Cys90, Cys92-Cys101, Cys109-Cys121, Cys115-Cys131, Cys133-Cys142, Cys148-Cys159, Cys153-Cys168, Cys170-Cys179, Cys186-Cys198, Cys192-Cys207, Cys209-Cys218, Cys225-Cys236, Cys230-Cys246, Cys248-Cys257, Cys264-Cys275, Cys269-Cys284, Cys286-Cys295, Cys302-Cys315, Cys309-Cys324, Cys326-Cys335, Cys342-Cys353, Cys347-Cys362, Cys364-Cys373, Cys379-Cys390, Cys384-Cys401, Cys403-Cys412, Cys419-Cys433, Cys427-Cys442, Cys444-Cys453, Cys460-Cys471, Cys465-Cys480, Cys482-Cys491, Cys498-Cys509, Cys503-Cys518, Cys520-Cys529, Cys536-Cys547, Cys541-Cys556, Cys558-Cys567, Cys574-Cys584, Cys579-Cys593, Cys595-Cys604, Cys611-Cys622, Cys616-Cys631, Cys633-Cys642, Cys649-Cys659, Cys654-Cys668, Cys670-Cys679, Cys686-Cys697, Cys691-Cys706, Cys708-Cys717, Cys724-Cys734, Cys729-Cys743, Cys745-Cys754, Cys761-Cys772, Cys766-Cys781, Cys783-Cys792, Cys799-Cys810, Cys804-Cys819, Cys821-Cys830, Cys837-Cys848, Cys842-Cys859, Cys861-Cys870, Cys877-Cys888, Cys882-Cys897, Cys899-Cys908, Cys915-Cys926, Cys920-Cys935, Cys937-Cys946, Cys953-Cys964, Cys958-Cys973, Cys975-Cys984, Cys991-Cys1002, Cys996-Cys1011, Cys1013-Cys1022, Cys1029-Cys1040, Cys1034-Cys1049, Cys1051-Cys1060, Cys1067-Cys1078, Cys1072-Cys1087, and Cys1089-Cys1098. Asn46 is a glycosylation site (N-linked (GlcNAc...) asparagine). The N-linked (GlcNAc...) asparagine glycan is linked to Asn155. The 38-residue stretch at 182-219 (DVNECDIPGHCQHGGTCLNLPGSYQCQCPQGFTGQYCD) folds into the EGF-like 5; calcium-binding domain. One can recognise an EGF-like 6 domain in the interval 221-258 (LYVPCAPSPCVNGGTCRQTGDFTFECNCLPGFEGSTCE). Residues 260 to 296 (NIDDCPNHRCQNGGVCVDGVNTYNCRCPPQWTGQFCT) enclose the EGF-like 7; calcium-binding domain. An EGF-like 8; calcium-binding domain is found at 298–336 (DVDECLLQPNACQNGGTCANRNGGYGCVCVNGWSGDDCS). Residues 338 to 374 (NIDDCAFASCTPGSTCIDRVASFSCMCPEGKAGLLCH) form the EGF-like 9; calcium-binding domain. The EGF-like 10 domain maps to 375 to 413 (LDDACISNPCHKGALCDTNPLNGQYICTCPQGYKGADCT). One can recognise an EGF-like 11; calcium-binding domain in the interval 415–454 (DVDECAMANSNPCEHAGKCVNTDGAFHCECLKGYAGPRCE). Residues 456-492 (DINECHSDPCQNDATCLDKIGGFTCLCMPGFKGVHCE) enclose the EGF-like 12; calcium-binding domain. Residues 494–530 (EINECQSNPCVNNGQCVDKVNRFQCLCPPGFTGPVCQ) form the EGF-like 13; calcium-binding domain. One can recognise an EGF-like 14; calcium-binding domain in the interval 532 to 568 (DIDDCSSTPCLNGAKCIDHPNGYECQCATGFTGVLCE). The EGF-like 15; calcium-binding domain maps to 570-605 (NIDNCDPDPCHHGQCQDGIDSYTCICNPGYMGAICS). The 37-residue stretch at 607–643 (QIDECYSSPCLNDGRCIDLVNGYQCNCQPGTSGVNCE) folds into the EGF-like 16; calcium-binding domain. O-linked (Glc...) serine; alternate glycosylation is present at Ser613. Ser613 carries an O-linked (Xyl...) serine; alternate glycan. Residues 645-680 (NFDDCASNPCIHGICMDGINRYSCVCSPGFTGQRCN) form the EGF-like 17; calcium-binding domain. The 37-residue stretch at 682–718 (DIDECASNPCRKGATCINGVNGFRCICPEGPHHPSCY) folds into the EGF-like 18; calcium-binding domain. An EGF-like 19 domain is found at 720-755 (QVNECLSNPCIHGNCTGGLSGYKCLCDAGWVGINCE). Asn733 is a glycosylation site (N-linked (GlcNAc...) asparagine). Residues 757 to 793 (DKNECLSNPCQNGGTCDNLVNGYRCTCKKGFKGYNCQ) form the EGF-like 20; calcium-binding domain. In terms of domain architecture, EGF-like 21; calcium-binding spans 795 to 831 (NIDECASNPCLNQGTCFDDISGYTCHCVLPYTGKNCQ). In terms of domain architecture, EGF-like 22 spans 833-871 (VLAPCSPNPCENAAVCKESPNFESYTCLCAPGWQGQRCT). Residues 873 to 909 (DIDECISKPCMNHGLCHNTQGSYMCECPPGFSGMDCE) enclose the EGF-like 23; calcium-binding domain. The region spanning 911–947 (DIDDCLANPCQNGGSCMDGVNTFSCLCLPGFTGDKCQ) is the EGF-like 24; calcium-binding domain. Residues 949–985 (DMNECLSEPCKNGGTCSDYVNSYTCKCQAGFDGVHCE) enclose the EGF-like 25; calcium-binding domain. In terms of domain architecture, EGF-like 26; calcium-binding spans 987 to 1023 (NINECTESSCFNGGTCVDGINSFSCLCPVGFTGSFCL). The EGF-like 27; calcium-binding domain maps to 1025 to 1061 (EINECSSHPCLNEGTCVDGLGTYRCSCPLGYTGKNCQ). 2 EGF-like domains span residues 1063–1099 (LVNL…AYCD) and 1101–1147 (PNVS…SYCE). A glycan (N-linked (GlcNAc...) asparagine) is linked at Asn1102. Cystine bridges form between Cys1105-Cys1126, Cys1120-Cys1135, Cys1137-Cys1146, Cys1153-Cys1164, Cys1158-Cys1173, Cys1175-Cys1184, Cys1191-Cys1202, Cys1196-Cys1211, Cys1213-Cys1222, Cys1229-Cys1241, Cys1235-Cys1250, Cys1252-Cys1261, Cys1268-Cys1281, Cys1273-Cys1290, Cys1292-Cys1301, Cys1308-Cys1319, Cys1313-Cys1331, Cys1333-Cys1342, Cys1378-Cys1389, Cys1383-Cys1400, Cys1402-Cys1411, Cys1425-Cys1448, Cys1430-Cys1443, and Cys1439-Cys1455. Residues 1149–1185 (QLDECASNPCQHGATCSDFIGGYRCECVPGYQGVNCE) enclose the EGF-like 30; calcium-binding domain. Residues 1187–1223 (EVDECQNQPCQNGGTCIDLVNHFKCSCPPGTRGLLCE) form the EGF-like 31; calcium-binding domain. In terms of domain architecture, EGF-like 32; calcium-binding spans 1225-1262 (NIDDCARGPHCLNGGQCMDRIGGYSCRCLPGFAGERCE). EGF-like domains follow at residues 1264 to 1302 (DINE…RHCE), 1304 to 1343 (FVDV…ARCQ), and 1374 to 1412 (CESG…SRCE). LNR repeat units follow at residues 1425–1465 (CLSQ…PWAN), 1466–1502 (CSSP…NSKT), and 1503–1544 (CKYD…NLAE). Residues 1425 to 1677 (CLSQYCADKA…SESLTPERTQ (253 aa)) are negative regulatory region (NRR). The N-linked (GlcNAc...) asparagine glycan is linked to Asn1465. Intrachain disulfides connect Cys1466–Cys1489, Cys1472–Cys1484, Cys1480–Cys1496, Cys1503–Cys1527, Cys1509–Cys1522, Cys1518–Cys1534, and Cys1632–Cys1639. Residues 1678–1698 (LLYLLAVAVVIILFIILLGVI) traverse the membrane as a helical segment. Residues 1699 to 2471 (MAKRKRKHGS…PPHNNMQVYA (773 aa)) lie on the Cytoplasmic side of the membrane. A Phosphothreonine modification is found at Thr1716. Residues 1754 to 1788 (TSEHWVDDEGPQPKKVKAEDEALLSEEDDPIDRRP) are disordered. Over residues 1774–1783 (EALLSEEDDP) the composition is skewed to acidic residues. The residue at position 1778 (Ser1778) is a Phosphoserine. Thr1802 carries the phosphothreonine modification. The residue at position 1804 (Ser1804) is a Phosphoserine. A Phosphothreonine modification is found at Thr1808. 6 ANK repeats span residues 1827 to 1871 (DGCT…SLQA), 1876 to 1905 (TGEM…DANA), 1909 to 1939 (MGRC…DLDA), 1943 to 1972 (DGTT…DVNA), 1976 to 2005 (HGKS…NRDM), and 2009 to 2038 (KEET…NRDI). Phosphoserine is present on residues Ser1842 and Ser1845. Phosphoserine is present on residues Ser2070, Ser2078, and Ser2081. Disordered regions lie at residues 2091–2168 (FLSL…TSSP) and 2380–2471 (VGKY…QVYA). Position 2097 is a phosphothreonine (Thr2097). Residues 2098 to 2107 (PMGKKSRRPS) are compositionally biased toward basic residues. 4 stretches are compositionally biased toward polar residues: residues 2108–2117 (AKSTMPTSLP), 2137–2150 (EKVQ…TLSP), 2159–2168 (TYVSDTTSSP), and 2388–2406 (SQHS…SHSG). Residues 2417 to 2445 (PSPESPDQWSSSSPHSASDWSDVTTSPTP) show a composition bias toward low complexity.

This sequence belongs to the NOTCH family. In terms of assembly, heterodimer of a C-terminal fragment N(TM) and an N-terminal fragment N(EC) which are probably linked by disulfide bonds. Interacts with MAML1, MAML2 and MAML3 which act as transcriptional coactivators for NOTCH2. Interacts with RELA/p65. Interacts with HIF1AN. Interacts (via ANK repeats) with TCIM, the interaction inhibits the nuclear translocation of NOTCH2 N2ICD. Interacts with CUL1, RBX1, SKP1 and FBXW7 that are SCF(FBXW7) E3 ubiquitin-protein ligase complex components. Interacts with MINAR1; this interaction increases MINAR1 stability and function. Interacts with NOTCH2NL (NOTCH2NLA, NOTCH2NLB and/or NOTCH2NLC); leading to enhance Notch signaling pathway in a non-cell-autonomous manner. Interacts with MDK; this interaction mediates a nuclear accumulation of NOTCH2 and therefore activation of NOTCH2 signaling leading to interaction between HES1 and STAT3. Interacts with MINAR2. Post-translationally, synthesized in the endoplasmic reticulum as an inactive form which is proteolytically cleaved by a furin-like convertase in the trans-Golgi network before it reaches the plasma membrane to yield an active, ligand-accessible form. Cleavage results in a C-terminal fragment N(TM) and a N-terminal fragment N(EC). Following ligand binding, it is cleaved by TNF-alpha converting enzyme (TACE) to yield a membrane-associated intermediate fragment called notch extracellular truncation (NEXT). This fragment is then cleaved by presenilin dependent gamma-secretase to release a notch-derived peptide containing the intracellular domain (NICD) from the membrane. In terms of processing, hydroxylated by HIF1AN. Can be either O-glucosylated or O-xylosylated at Ser-613 by POGLUT1. Post-translationally, phosphorylated by GSK3. GSK3-mediated phosphorylation is necessary for NOTCH2 recognition by FBXW7, ubiquitination and degradation via the ubiquitin proteasome pathway. As to expression, expressed in the brain, heart, kidney, lung, skeletal muscle and liver. Ubiquitously expressed in the embryo.

The protein resides in the cell membrane. It is found in the nucleus. Its subcellular location is the cytoplasm. In terms of biological role, functions as a receptor for membrane-bound ligands Jagged-1 (JAG1), Jagged-2 (JAG2) and Delta-1 (DLL1) to regulate cell-fate determination. Upon ligand activation through the released notch intracellular domain (NICD) it forms a transcriptional activator complex with RBPJ/RBPSUH and activates genes of the enhancer of split locus. Affects the implementation of differentiation, proliferation and apoptotic programs. Involved in bone remodeling and homeostasis. In collaboration with RELA/p65 enhances NFATc1 promoter activity and positively regulates RANKL-induced osteoclast differentiation. Positively regulates self-renewal of liver cancer cells. This chain is Neurogenic locus notch homolog protein 2, found in Homo sapiens (Human).